Reading from the N-terminus, the 415-residue chain is Multifunctional CCA protein (415 aa).

Glycine 8 and arginine 11 together coordinate ATP. 2 residues coordinate CTP: glycine 8 and arginine 11. Residues aspartate 21 and aspartate 23 each coordinate Mg(2+). ATP-binding residues include arginine 91, arginine 143, and arginine 146. 3 residues coordinate CTP: arginine 91, arginine 143, and arginine 146. Residues 232 to 333 (TGVHVMMVID…TRLLERCDAL (102 aa)) form the HD domain.

The protein belongs to the tRNA nucleotidyltransferase/poly(A) polymerase family. Bacterial CCA-adding enzyme type 1 subfamily. Monomer. Can also form homodimers and oligomers. Requires Mg(2+) as cofactor. It depends on Ni(2+) as a cofactor.

It catalyses the reaction a tRNA precursor + 2 CTP + ATP = a tRNA with a 3' CCA end + 3 diphosphate. It carries out the reaction a tRNA with a 3' CCA end + 2 CTP + ATP = a tRNA with a 3' CCACCA end + 3 diphosphate. Catalyzes the addition and repair of the essential 3'-terminal CCA sequence in tRNAs without using a nucleic acid template. Adds these three nucleotides in the order of C, C, and A to the tRNA nucleotide-73, using CTP and ATP as substrates and producing inorganic pyrophosphate. tRNA 3'-terminal CCA addition is required both for tRNA processing and repair. Also involved in tRNA surveillance by mediating tandem CCA addition to generate a CCACCA at the 3' terminus of unstable tRNAs. While stable tRNAs receive only 3'-terminal CCA, unstable tRNAs are marked with CCACCA and rapidly degraded. This is Multifunctional CCA protein from Cupriavidus pinatubonensis (strain JMP 134 / LMG 1197) (Cupriavidus necator (strain JMP 134)).